Reading from the N-terminus, the 187-residue chain is ECF RNA polymerase sigma factor SigW (187 aa).

The interval 3 to 95 is sigma-70 factor domain-2; it reads MMIKKRIKQV…RKKKPDYYLD (93 aa). The Polymerase core binding motif lies at 47-50; that stretch reads DIAQ. Positions 125-187 are sigma-70 factor domain-4; it reads ELSNTIQQKI…EALRKQLRDL (63 aa). The H-T-H motif DNA-binding region spans 166–184; it reads VGTVKTRIHRGREALRKQL.

The protein belongs to the sigma-70 factor family. ECF subfamily. As to quaternary structure, interacts transiently with the RNA polymerase catalytic core formed by RpoA, RpoB, RpoC and RpoZ (2 alpha, 1 beta, 1 beta' and 1 omega subunit) to form the RNA polymerase holoenzyme that can initiate transcription. Forms a heterodimer with cognate anti-sigma factor RsiW, which prevents it from binding to the -10 and -35 promoter elements.

With respect to regulation, extracytoplasmic function (ECF) sigma factors are held in an inactive form by a cognate anti-sigma factor (RsiW for this protein) until released by regulated membrane proteolysis (RIP). RIP occurs when an extracytoplasmic signal (envelope stress) triggers a concerted proteolytic cascade to transmit information and elicit cellular responses. The anti-sigma factor RsiW is a membrane protein, binding sigma-W in the cytoplasm. RsiW is first cut extracytoplasmically (site-1 protease, S1P, by PrsW), then within the membrane itself (site-2 protease, S2P, by RasP), while cytoplasmic proteases (predominantly ClpX-ClpP) finish degrading the regulatory protein, liberating sigma-W. In terms of biological role, sigma factors are initiation factors that promote the attachment of RNA polymerase (RNAP) to specific initiation sites and are then released. Sigma-W controls genes involved in response to cell envelope stress such as antimicrobial peptides, alkaline pH, transport processes and detoxification. In Bacillus subtilis (strain 168), this protein is ECF RNA polymerase sigma factor SigW (sigW).